Reading from the N-terminus, the 97-residue chain is Eotaxin (97 aa).

The first 23 residues, 1–23, serve as a signal peptide directing secretion; that stretch reads MQSSTALLFLLLTVTSFTSQVLA. Intrachain disulfides connect Cys-32/Cys-57 and Cys-33/Cys-73. O-linked (GalNAc...) threonine glycosylation is present at Thr-94.

This sequence belongs to the intercrine beta (chemokine CC) family. In terms of tissue distribution, expressed constitutively in the thymus. Expression inducible in the lung (type I alveolar epithelial cells), intestine, heart, spleen, kidney.

Its subcellular location is the secreted. In response to the presence of allergens, this protein directly promotes the accumulation of eosinophils (a prominent feature of allergic inflammatory reactions), but not lymphocytes, macrophages or neutrophils. Binds to CCR3. The protein is Eotaxin (Ccl11) of Mus musculus (Mouse).